A 269-amino-acid chain; its full sequence is uncharacterized protein (269 aa).

Residues 52–262 (KNVYEQLVAT…RKILVESINK (211 aa)) are a coiled coil.

This is an uncharacterized protein from Caenorhabditis elegans.